Consider the following 316-residue polypeptide: SWR complex protein 2 (316 aa).

Disordered stretches follow at residues 1–81, 93–127, and 153–180; these read MSAT…GEEV, KRKI…KKKY, and ETRL…TMTQ. Over residues 20 to 31 the composition is skewed to basic and acidic residues; sequence KMRELLEKEHLR. Positions 20-95 form a coiled coil; the sequence is KMRELLEKEH…RDEERIKKRK (76 aa). Residues 40 to 56 show a composition bias toward acidic residues; it reads EKEDEEYNIEEEEEAER. A phosphoserine mark is found at Ser64 and Ser65. Over residues 70–81 the composition is skewed to basic and acidic residues; sequence ELKKLEEEGEEV. A compositionally biased stretch (polar residues) spans 167–180; the sequence is VSASANRQKGTMTQ.

This sequence belongs to the VPS72/YL1 family. In terms of assembly, component of the SWR1 chromatin-remodeling complex.

It localises to the nucleus. In terms of biological role, participates in the catalytic exchange of histone H2A for the H2A variant pht1, an euchromatin-specific factor, leading to chromatin remodeling and changes in transcription of targeted genes. The chain is SWR complex protein 2 (swc2) from Schizosaccharomyces pombe (strain 972 / ATCC 24843) (Fission yeast).